A 190-amino-acid polypeptide reads, in one-letter code: dCTP deaminase (190 aa).

Residues 111–116 (KSTYAR), 135–137 (TLE), Q156, Y172, and Q182 contribute to the dCTP site. E137 acts as the Proton donor/acceptor in catalysis.

It belongs to the dCTP deaminase family. In terms of assembly, homotrimer.

The enzyme catalyses dCTP + H2O + H(+) = dUTP + NH4(+). Its pathway is pyrimidine metabolism; dUMP biosynthesis; dUMP from dCTP (dUTP route): step 1/2. In terms of biological role, catalyzes the deamination of dCTP to dUTP. The polypeptide is dCTP deaminase (Stenotrophomonas maltophilia (strain R551-3)).